Consider the following 84-residue polypeptide: MAARVGAFLKNAWDKEPVLVVSFVVGGLAVILPPLSPYFKYSVMINKATPYNYPVPVRDDGNMPDVPSHPQDPQGPSLEWLKKL.

Alanine 2 is modified (N-acetylalanine). The helical transmembrane segment at 19 to 39 (LVVSFVVGGLAVILPPLSPYF) threads the bilayer. The segment at 56–84 (PVRDDGNMPDVPSHPQDPQGPSLEWLKKL) is disordered.

It belongs to the complex I NDUFA3 subunit family. As to quaternary structure, complex I is composed of 45 different subunits.

The protein resides in the mitochondrion inner membrane. Functionally, accessory subunit of the mitochondrial membrane respiratory chain NADH dehydrogenase (Complex I), that is believed not to be involved in catalysis. Complex I functions in the transfer of electrons from NADH to the respiratory chain. The immediate electron acceptor for the enzyme is believed to be ubiquinone. The chain is NADH dehydrogenase [ubiquinone] 1 alpha subcomplex subunit 3 (NDUFA3) from Homo sapiens (Human).